Reading from the N-terminus, the 112-residue chain is UPF0212 protein Mhun_0078 (112 aa).

The protein belongs to the UPF0212 family.

The polypeptide is UPF0212 protein Mhun_0078 (Methanospirillum hungatei JF-1 (strain ATCC 27890 / DSM 864 / NBRC 100397 / JF-1)).